The sequence spans 396 residues: Ribosomal RNA large subunit methyltransferase I (396 aa).

Residues 2 to 81 enclose the PUA domain; the sequence is SVRLVLTKGR…ETIDIAFFTR (80 aa).

This sequence belongs to the methyltransferase superfamily. RlmI family.

It localises to the cytoplasm. It carries out the reaction cytidine(1962) in 23S rRNA + S-adenosyl-L-methionine = 5-methylcytidine(1962) in 23S rRNA + S-adenosyl-L-homocysteine + H(+). Functionally, specifically methylates the cytosine at position 1962 (m5C1962) of 23S rRNA. This Enterobacter sp. (strain 638) protein is Ribosomal RNA large subunit methyltransferase I.